Reading from the N-terminus, the 147-residue chain is E3 ubiquitin-protein ligase RHA2B (147 aa).

The RING-type; atypical zinc finger occupies 74 to 116 (CIVCLSKLKTGEEVRKLDCRHVFHKQCLEGWLQHLNFNCPLCR).

As to quaternary structure, interacts with NAC19. As to expression, expressed in vascular tissue, root tips, embryos and pistils.

It localises to the cytoplasm. Its subcellular location is the nucleus. The enzyme catalyses S-ubiquitinyl-[E2 ubiquitin-conjugating enzyme]-L-cysteine + [acceptor protein]-L-lysine = [E2 ubiquitin-conjugating enzyme]-L-cysteine + N(6)-ubiquitinyl-[acceptor protein]-L-lysine.. It participates in protein modification; protein ubiquitination. Functionally, E3 ubiquitin-protein ligase involved in the positive regulation of abscisic acid (ABA) signaling and responses to salt and osmotic stresses during seed germination and early seedling development. Acts additively with RHA2A in regulating ABA signaling and drought response. Possesses E3 ubiquitin ligase activity in vitro. The sequence is that of E3 ubiquitin-protein ligase RHA2B from Arabidopsis thaliana (Mouse-ear cress).